We begin with the raw amino-acid sequence, 214 residues long: MSHCVVLNKLESVLIIGDSRYALSKNEVLLLECLYLRAGDVISHDELLTTCWPDRVVSPTSLPVAIKHIRDVFRKITRSEVIKTYKNEGYSYQKDSVLIIIDDGSTEKESHSAAYTRKEKPDIPIKLVGLQILSHLNSTFFIAIMMVIIIIFFMVGGNDIVSFIDSDTNSVIITNVTTKMNGPTAGLPKVKNSMIFKDDFGLVIICDQSECKQQ.

A signal peptide spans 1 to 24 (MSHCVVLNKLESVLIIGDSRYALS). A DNA-binding region (ompR/PhoB-type) is located at residues 1 to 94 (MSHCVVLNKL…YKNEGYSYQK (94 aa)).

Its function is as follows. Required for expression of pH 6 antigen. This is Protein PsaE (psaE) from Yersinia pseudotuberculosis serotype I (strain IP32953).